Consider the following 406-residue polypeptide: 8-amino-7-oxononanoate synthase (406 aa).

Arg-21 is a binding site for substrate. 112-113 (GY) contributes to the pyridoxal 5'-phosphate binding site. His-137 serves as a coordination point for substrate. Pyridoxal 5'-phosphate-binding residues include Ser-183, His-211, and Thr-239. N6-(pyridoxal phosphate)lysine is present on Lys-242. Thr-358 contributes to the substrate binding site.

Belongs to the class-II pyridoxal-phosphate-dependent aminotransferase family. BioF subfamily. In terms of assembly, homodimer. Requires pyridoxal 5'-phosphate as cofactor.

The enzyme catalyses 6-carboxyhexanoyl-[ACP] + L-alanine + H(+) = (8S)-8-amino-7-oxononanoate + holo-[ACP] + CO2. The protein operates within cofactor biosynthesis; biotin biosynthesis. In terms of biological role, catalyzes the decarboxylative condensation of pimeloyl-[acyl-carrier protein] and L-alanine to produce 8-amino-7-oxononanoate (AON), [acyl-carrier protein], and carbon dioxide. This is 8-amino-7-oxononanoate synthase from Burkholderia cenocepacia (strain HI2424).